The chain runs to 238 residues: Nicotinamide/nicotinic acid mononucleotide adenylyltransferase (238 aa).

NAD(+)-binding residues include serine 29 and phenylalanine 30. The ATP site is built by histidine 37 and lysine 70. Threonine 107, glycine 136, aspartate 138, tryptophan 149, arginine 168, and asparagine 199 together coordinate NAD(+). Residue 204–205 (SR) participates in ATP binding.

It belongs to the eukaryotic NMN adenylyltransferase family. A divalent metal cation is required as a cofactor.

The protein resides in the nucleus. It carries out the reaction beta-nicotinamide D-ribonucleotide + ATP + H(+) = diphosphate + NAD(+). The enzyme catalyses nicotinate beta-D-ribonucleotide + ATP + H(+) = deamido-NAD(+) + diphosphate. The protein operates within cofactor biosynthesis; NAD(+) biosynthesis; deamido-NAD(+) from nicotinate D-ribonucleotide: step 1/1. Its pathway is cofactor biosynthesis; NAD(+) biosynthesis; NAD(+) from nicotinamide D-ribonucleotide: step 1/1. In terms of biological role, catalyzes the formation of NAD(+) from nicotinamide mononucleotide (NMN) and ATP. Can also use the deamidated form; nicotinic acid mononucleotide (NaMN) as substrate. In Arabidopsis thaliana (Mouse-ear cress), this protein is Nicotinamide/nicotinic acid mononucleotide adenylyltransferase (NMNAT).